We begin with the raw amino-acid sequence, 335 residues long: MSLDINQIALHQLIKRDEQNLELVLRDSLLEPTETVVEMVAELHRVYSAKNKAYGLFSEESELAQTLRLQRQGEEDFLAFSRAATGRLRDELAKYPFADGGFVLFCHYRYLAVEYLLVAVLSNLSSMRVNENLDINPTHYLDINHADIVARIDLTEWETNPESTRYLTFLKGRVGRKVADFFMDFLGASEGLNAKAQNRGLLQAVDDFTAEAQLDKAERQNVRQQVYSYCNEQLQAGEEIELESLSKELAGVSEVSFTEFAAEKGYELEESFPADRSTLRQLTKFAGSGGGLTINFDAMLLGERIFWDPATDTLTIKGTPPNLRDQLQRRTSGGN.

It belongs to the YejK family.

The protein resides in the cytoplasm. Its subcellular location is the nucleoid. The chain is Nucleoid-associated protein YejK from Shigella dysenteriae serotype 1 (strain Sd197).